We begin with the raw amino-acid sequence, 138 residues long: Putative pre-16S rRNA nuclease (138 aa).

Belongs to the YqgF nuclease family.

The protein localises to the cytoplasm. Functionally, could be a nuclease involved in processing of the 5'-end of pre-16S rRNA. The protein is Putative pre-16S rRNA nuclease of Klebsiella pneumoniae (strain 342).